Consider the following 382-residue polypeptide: L-arabinitol 4-dehydrogenase (382 aa).

Zn(2+) is bound by residues cysteine 55, histidine 80, glutamate 81, cysteine 110, cysteine 113, cysteine 116, cysteine 124, and glutamate 165. NAD(+) is bound by residues 192–193 (PI), aspartate 213, arginine 218, isoleucine 293, and 317–319 (QYR).

It belongs to the zinc-containing alcohol dehydrogenase family. Homotetramer. It depends on Zn(2+) as a cofactor.

The catalysed reaction is L-arabinitol + NAD(+) = L-xylulose + NADH + H(+). Its pathway is carbohydrate degradation; L-arabinose degradation via L-arabinitol; D-xylulose 5-phosphate from L-arabinose (fungal route): step 2/5. In terms of biological role, catalyzes the NAD-dependent oxidation of L-arabinitol to L-xylulose in the fungal L-arabinose catabolic pathway. L-arabinose catabolism is important for using plant material as a carbon source. Also active on ribitol and xylitol. Not active with NADP as cosubstrate. The sequence is that of L-arabinitol 4-dehydrogenase (ladA) from Aspergillus oryzae (Yellow koji mold).